The primary structure comprises 195 residues: Cholesin (195 aa).

A disordered region spans residues 1–78 (MAKHKRKGLE…KEEKKRLREA (78 aa)). Composition is skewed to basic and acidic residues over residues 8-18 (GLEGTGKESKR) and 26-39 (ETPR…DKET). S41, S48, and S52 each carry phosphoserine. Positions 53 to 77 (PEERRVLERKLKKERKKEEKKRLRE) are enriched in basic and acidic residues. S96 carries the phosphoserine modification.

In terms of tissue distribution, secreted via exosomes, secreted from the instestine, secretion is induced by feeding and cholesterol absorption. Expressed in enterocytes.

The protein localises to the secreted. In terms of biological role, hormone secreted from the intestine in response to cholesterol, where it acts to inhibit cholesterol synthesis in the liver and VLDL secretion,leading to a reduction in circulating cholesterol levels. Acts through binding to its receptor, GPR146. The chain is Cholesin (Chlsn) from Mus musculus (Mouse).